Consider the following 300-residue polypeptide: Merozoite surface protein 2 (300 aa).

The first 20 residues, 1–20, serve as a signal peptide directing secretion; it reads MKVIKTLSIINFFIFVTFNI. N-linked (GlcNAc...) asparagine glycosylation is found at Asn22 and Asn36. Residues 44 to 226 are polymorphic region; sequence EESKPPTGAV…EQTESPELQS (183 aa). A 1; inverted repeat occupies 51-58; the sequence is GAVAGSGA. Residues 51–74 are 7 X 8 AA tandem repeats of G-S-G-A-G-A-V-A; the sequence is GAVAGSGAGAGSGAGAVAGSGAGA. 5 consecutive repeat copies span residues 61-68, 69-76, 77-84, 85-92, and 93-100. A 7; inverted repeat occupies 103-110; that stretch reads GAVAGSGA. The segment at 111-261 is disordered; sequence GNGANPGADA…DSQKECTDGN (151 aa). A compositionally biased stretch (low complexity) spans 124-148; sequence PSTPATTTTTTTTNDAEASTSTSSE. Over residues 149-165 the composition is skewed to basic and acidic residues; the sequence is NRNHNNAETNPKGKGEV. Composition is skewed to polar residues over residues 167-193 and 200-228; these read KPNQANKETQNNSNVQQDSQTKSNVPR and KSPTAQPEQAENSAPTAEQTESPELQSAP. Asn177 is a glycosylation site (N-linked (GlcNAc...) asparagine). Asn249 carries N-linked (GlcNAc...) asparagine glycosylation. Cys257 and Cys265 form a disulfide bridge. N-linked (GlcNAc...) asparagine glycans are attached at residues Asn273 and Asn274. Residue Asn274 is the site of GPI-anchor amidated asparagine attachment. The propeptide at 275-300 is removed in mature form; it reads SSNIASINKFVVLISATLVLSFAIFI.

The protein localises to the cell membrane. Its function is as follows. May play a role in the merozoite attachment to the erythrocyte. The chain is Merozoite surface protein 2 from Plasmodium falciparum (isolate mad71 / Papua New Guinea).